Here is a 302-residue protein sequence, read N- to C-terminus: Enolase-phosphatase E1 (302 aa).

The span at 1–10 shows a compositional bias: basic residues; that stretch reads MSDSRLRRRQ. The disordered stretch occupies residues 1-25; sequence MSDSRLRRRQGTAGTDNKRRADGPH. Over residues 16-25 the composition is skewed to basic and acidic residues; it reads DNKRRADGPH. Mg(2+)-binding residues include D40 and E42. Substrate-binding positions include 183–184 and K217; that span reads SS. D242 contacts Mg(2+).

This sequence belongs to the HAD-like hydrolase superfamily. MasA/MtnC family. Monomer. Mg(2+) is required as a cofactor.

It is found in the cytoplasm. The protein localises to the nucleus. It catalyses the reaction 5-methylsulfanyl-2,3-dioxopentyl phosphate + H2O = 1,2-dihydroxy-5-(methylsulfanyl)pent-1-en-3-one + phosphate. It functions in the pathway amino-acid biosynthesis; L-methionine biosynthesis via salvage pathway; L-methionine from S-methyl-5-thio-alpha-D-ribose 1-phosphate: step 3/6. Its pathway is amino-acid biosynthesis; L-methionine biosynthesis via salvage pathway; L-methionine from S-methyl-5-thio-alpha-D-ribose 1-phosphate: step 4/6. Bifunctional enzyme that catalyzes the enolization of 2,3-diketo-5-methylthiopentyl-1-phosphate (DK-MTP-1-P) into the intermediate 2-hydroxy-3-keto-5-methylthiopentenyl-1-phosphate (HK-MTPenyl-1-P), which is then dephosphorylated to form the acireductone 1,2-dihydroxy-3-keto-5-methylthiopentene (DHK-MTPene). In Branchiostoma floridae (Florida lancelet), this protein is Enolase-phosphatase E1.